The primary structure comprises 662 residues: Serine/threonine-protein kinase PTK1/STK1 (662 aa).

The interval 35–119 is disordered; that stretch reads GNKLKKKASL…SSTSRNLSNS (85 aa). The span at 50–60 shows a compositional bias: low complexity; that stretch reads STSTNDSESSS. Polar residues-rich tracts occupy residues 61–91 and 98–119; these read PKLPNSLKTSRRANSFAHTTNSKRSLSSAST and GSSTSISRGNRHSSTSRNLSNS. The 308-residue stretch at 196-503 folds into the Protein kinase domain; the sequence is DDENKTIGWG…IDDLFEDPWF (308 aa). Residues 202–210 and Lys-226 contribute to the ATP site; that span reads IGWGGSCEV. Asp-329 (proton acceptor) is an active-site residue. The disordered stretch occupies residues 605–631; the sequence is TLTLSEEPPATPAPSAPSAPSARVRGH.

It belongs to the protein kinase superfamily. Ser/Thr protein kinase family.

It carries out the reaction L-seryl-[protein] + ATP = O-phospho-L-seryl-[protein] + ADP + H(+). It catalyses the reaction L-threonyl-[protein] + ATP = O-phospho-L-threonyl-[protein] + ADP + H(+). Essential determinant for low-affinity spermidine transport. The protein is Serine/threonine-protein kinase PTK1/STK1 (PTK1) of Saccharomyces cerevisiae (strain ATCC 204508 / S288c) (Baker's yeast).